Reading from the N-terminus, the 99-residue chain is Essential MCU regulator, mitochondrial (99 aa).

A mitochondrion-targeting transit peptide spans 1 to 39 (MAARVGVLSVAGFRAAARAGGLLRASKQSSAVSHVPCRT). Residues 40–57 (AIATSAGTVLPKPEKVSF) are Mitochondrial matrix-facing. A helical transmembrane segment spans residues 58-77 (GLLRVFTVVIPFLYIGTLIS). Residues 78–99 (KNFAALLEEHDIFVPEDDDDDD) are Mitochondrial intermembrane-facing.

It belongs to the SMDT1/EMRE family. In terms of assembly, component of the uniplex complex.

Its subcellular location is the mitochondrion inner membrane. In terms of biological role, essential regulatory subunit of the mitochondrial calcium uniporter complex (uniplex), a complex that mediates calcium uptake into mitochondria. Required to bridge the calcium-sensing proteins micu1 with the calcium-conducting subunit mcu. Acts by mediating activation of mcu and retention of micu1 to the mcu pore, in order to ensure tight regulation of the uniplex complex and appropriate responses to intracellular calcium signaling. The polypeptide is Essential MCU regulator, mitochondrial (Xenopus tropicalis (Western clawed frog)).